The chain runs to 617 residues: tRNA uridine 5-carboxymethylaminomethyl modification enzyme MnmG (617 aa).

FAD contacts are provided by residues 9–14, Val121, and Thr176; that span reads GAGHAG. An NAD(+)-binding site is contributed by 269–283; sequence GPRYCPSIEDKFVRF. Position 366 (Gln366) interacts with FAD.

The protein belongs to the MnmG family. Homodimer. Heterotetramer of two MnmE and two MnmG subunits. The cofactor is FAD.

The protein localises to the cytoplasm. NAD-binding protein involved in the addition of a carboxymethylaminomethyl (cmnm) group at the wobble position (U34) of certain tRNAs, forming tRNA-cmnm(5)s(2)U34. This Acholeplasma laidlawii (strain PG-8A) protein is tRNA uridine 5-carboxymethylaminomethyl modification enzyme MnmG.